Consider the following 255-residue polypeptide: ParA family protein CT_582 (255 aa).

Belongs to the ParA family.

The protein is ParA family protein CT_582 of Chlamydia trachomatis serovar D (strain ATCC VR-885 / DSM 19411 / UW-3/Cx).